A 97-amino-acid polypeptide reads, in one-letter code: C-C motif chemokine 7 (97 aa).

An N-terminal signal peptide occupies residues 1 to 23; that stretch reads MRISATLLCLLLIAAAFSIQVWA. The residue at position 24 (Q24) is a Pyrrolidone carboxylic acid. An N-linked (GlcNAc...) asparagine glycan is attached at N29. Disulfide bonds link C33/C57 and C34/C73.

This sequence belongs to the intercrine beta (chemokine CC) family. Monomer. Interacts with TNFAIP6 (via Link domain).

The protein localises to the secreted. Chemotactic factor that attracts monocytes and eosinophils, but not neutrophils. Augments monocyte anti-tumor activity. The polypeptide is C-C motif chemokine 7 (Ccl7) (Mus musculus (Mouse)).